Here is a 210-residue protein sequence, read N- to C-terminus: Small ribosomal subunit protein uS3 (210 aa).

Positions L38–R106 constitute a KH type-2 domain.

Belongs to the universal ribosomal protein uS3 family. As to quaternary structure, part of the 30S ribosomal subunit. Forms a tight complex with proteins S10 and S14.

Binds the lower part of the 30S subunit head. Binds mRNA in the 70S ribosome, positioning it for translation. The polypeptide is Small ribosomal subunit protein uS3 (Geotalea uraniireducens (strain Rf4) (Geobacter uraniireducens)).